Here is a 193-residue protein sequence, read N- to C-terminus: Interleukin-23 subunit alpha (193 aa).

The N-terminal stretch at 1–22 (MLGSRAVMLMLLLLLLPWTSQG) is a signal peptide.

This sequence belongs to the IL-6 superfamily. As to quaternary structure, heterodimer with IL12B; disulfide-linked. The heterodimer is known as interleukin IL-23. Interacts with IL23R; this interaction enables recruitment of IL12RB1.

Its subcellular location is the secreted. In terms of biological role, associates with IL12B to form the pro-inflammatory cytokine IL-23 that plays different roles in innate and adaptive immunity. Released by antigen-presenting cells such as dendritic cells or macrophages, binds to a heterodimeric receptor complex composed of IL12RB1 and IL23R to activate JAK2 and TYK2 which then phosphorylate the receptor to form a docking site leading to the phosphorylation of STAT3 and STAT4. This process leads to activation of several pathways including p38 MAPK or NF-kappa-B and promotes the production of pro-inflammatory cytokines such as interleukin-17A/IL17A. In turn, participates in the early and effective intracellular bacterial clearance. Promotes the expansion and survival of T-helper 17 cells, a CD4-positive helper T-cell subset that produces IL-17, as well as other IL-17-producing cells. In Sus scrofa (Pig), this protein is Interleukin-23 subunit alpha (IL23A).